The sequence spans 379 residues: Pectin lyase B (379 aa).

A signal peptide spans 1–19 (MRLHAPILSLLAAAASTSA). 2 disulfide bridges follow: Cys82–Cys101 and Cys91–Cys225. Residue Asn128 is glycosylated (N-linked (GlcNAc...) asparagine). Arg255 is a catalytic residue. A disulfide bridge links Cys322 with Cys330.

This sequence belongs to the polysaccharide lyase 1 family.

It is found in the secreted. The catalysed reaction is Eliminative cleavage of (1-&gt;4)-alpha-D-galacturonan methyl ester to give oligosaccharides with 4-deoxy-6-O-methyl-alpha-D-galact-4-enuronosyl groups at their non-reducing ends.. Functionally, pectinolytic enzymes consist of four classes of enzymes: pectin lyase, polygalacturonase, pectin methylesterase and rhamnogalacturonase. Among pectinolytic enzymes, pectin lyase is the most important in depolymerization of pectin, since it cleaves internal glycosidic bonds of highly methylated pectins. The chain is Pectin lyase B (pelB) from Emericella nidulans (strain FGSC A4 / ATCC 38163 / CBS 112.46 / NRRL 194 / M139) (Aspergillus nidulans).